Consider the following 506-residue polypeptide: WD repeat-containing protein 55 homolog (506 aa).

Positions M1–A11 are enriched in basic and acidic residues. 3 disordered regions span residues M1–D20, Q33–S87, and A100–D132. Positions Q33 to L48 are enriched in acidic residues. A compositionally biased stretch (low complexity) spans G61–S74. The segment covering N78–S87 has biased composition (acidic residues). 6 WD repeats span residues R156–L195, V200–L239, A243–E281, E284–Q323, P326–D365, and Q410–D449. Residues D480–T506 are disordered. The span at G493 to T506 shows a compositional bias: low complexity.

Belongs to the WD repeat WDR55 family.

This Drosophila mojavensis (Fruit fly) protein is WD repeat-containing protein 55 homolog.